The following is a 155-amino-acid chain: Endoribonuclease YbeY (155 aa).

Zn(2+) is bound by residues His117, His121, and His127.

This sequence belongs to the endoribonuclease YbeY family. Zn(2+) is required as a cofactor.

Its subcellular location is the cytoplasm. In terms of biological role, single strand-specific metallo-endoribonuclease involved in late-stage 70S ribosome quality control and in maturation of the 3' terminus of the 16S rRNA. The protein is Endoribonuclease YbeY of Treponema denticola (strain ATCC 35405 / DSM 14222 / CIP 103919 / JCM 8153 / KCTC 15104).